The sequence spans 811 residues: Ribonucleoside-diphosphate reductase large subunit (811 aa).

Residues T231, 246–247, G277, 450–454, and 636–640 each bind substrate; these read SC, NLCTE, and PTASS. Cysteines 247 and 467 form a disulfide. The active-site Proton acceptor is the N450. C452 acts as the Cysteine radical intermediate in catalysis. The active-site Proton acceptor is the E454.

This sequence belongs to the ribonucleoside diphosphate reductase large chain family. In terms of assembly, heterotetramer composed of a homodimer of the large subunit (R1) and a homodimer of the small subunit (R2). Larger multisubunit protein complex are also active, composed of (R1)n(R2)n.

It catalyses the reaction a 2'-deoxyribonucleoside 5'-diphosphate + [thioredoxin]-disulfide + H2O = a ribonucleoside 5'-diphosphate + [thioredoxin]-dithiol. In terms of biological role, ribonucleoside-diphosphate reductase holoenzyme provides the precursors necessary for viral DNA synthesis. Allows virus growth in non-dividing cells, as well as reactivation from latency in infected hosts. Catalyzes the biosynthesis of deoxyribonucleotides from the corresponding ribonucleotides. This chain is Ribonucleoside-diphosphate reductase large subunit, found in Amazona oratrix (yellow-headed parrot).